The primary structure comprises 436 residues: Hydrogenobyrinate a,c-diamide synthase (436 aa).

The region spanning 244 to 435 (RIAVARDDAF…MHVIDFSGEA (192 aa)) is the GATase cobBQ-type domain. Cys-327 acts as the Nucleophile in catalysis.

This sequence belongs to the CobB/CbiA family. Requires Mg(2+) as cofactor.

It catalyses the reaction hydrogenobyrinate + 2 L-glutamine + 2 ATP + 2 H2O = hydrogenobyrinate a,c-diamide + 2 L-glutamate + 2 ADP + 2 phosphate + 2 H(+). It functions in the pathway cofactor biosynthesis; adenosylcobalamin biosynthesis; cob(II)yrinate a,c-diamide from precorrin-2 (aerobic route): step 9/10. In terms of biological role, catalyzes the ATP-dependent amidation of the two carboxylate groups at positions a and c of hydrogenobyrinate, using either L-glutamine or ammonia as the nitrogen source. The protein is Hydrogenobyrinate a,c-diamide synthase of Brucella abortus biovar 1 (strain 9-941).